The sequence spans 394 residues: E3 ubiquitin-protein ligase RNF149 (394 aa).

An N-terminal signal peptide occupies residues 1–31 (MAARRRPAAGVGARDALAVLALALCTPGVGG). N-linked (GlcNAc...) asparagine glycans are attached at residues N51 and N141. The PA domain maps to 66–171 (SSLREERQGL…PKGREIFDLV (106 aa)). Residues 197 to 217 (VVFVAIAFITMMIISLAWLIF) form a helical membrane-spanning segment. The RING-type; atypical zinc finger occupies 265–306 (CAVCIENFKVKDVIRILPCKHIFHRICIDPWLLDHRTCPMCK). The segment at 321-394 (DTQELPTPEA…SEPQHGGSIC (74 aa)) is disordered. The residue at position 327 (T327) is a Phosphothreonine. N339 carries N-linked (GlcNAc...) asparagine glycosylation. Residues S341 and S344 each carry the phosphoserine modification. The span at 352–362 (SNLPSSSSSES) shows a compositional bias: low complexity.

The protein localises to the membrane. The catalysed reaction is S-ubiquitinyl-[E2 ubiquitin-conjugating enzyme]-L-cysteine + [acceptor protein]-L-lysine = [E2 ubiquitin-conjugating enzyme]-L-cysteine + N(6)-ubiquitinyl-[acceptor protein]-L-lysine.. Its pathway is protein modification; protein ubiquitination. Functionally, E3 ubiquitin-protein ligase. Ubiquitinates BRAF, inducing its proteasomal degradation. This Mus musculus (Mouse) protein is E3 ubiquitin-protein ligase RNF149 (Rnf149).